The following is a 273-amino-acid chain: Thioredoxin-like 1-3, chloroplastic (273 aa).

The N-terminal 44 residues, Met1–Ser44, are a transit peptide targeting the chloroplast. Residues Leu62 to Arg202 form the Thioredoxin domain. Catalysis depends on nucleophile residues Cys125 and Cys128. A disulfide bond links Cys125 and Cys128.

This sequence belongs to the thioredoxin family.

It localises to the plastid. The protein resides in the chloroplast. Functionally, probable thiol-disulfide oxidoreductase that may participate in various redox reactions. The sequence is that of Thioredoxin-like 1-3, chloroplastic from Arabidopsis thaliana (Mouse-ear cress).